The primary structure comprises 154 residues: Ribonuclease H (154 aa).

The region spanning 3–144 is the RNase H type-1 domain; that stretch reads ELPVVSIFTD…ADQLARDGVA (142 aa). Residues Asp-12, Glu-50, Asp-72, and Asp-136 each coordinate Mg(2+).

The protein belongs to the RNase H family. Monomer. Mg(2+) serves as cofactor.

It is found in the cytoplasm. It catalyses the reaction Endonucleolytic cleavage to 5'-phosphomonoester.. Endonuclease that specifically degrades the RNA of RNA-DNA hybrids. The sequence is that of Ribonuclease H from Bradyrhizobium sp. (strain ORS 278).